The chain runs to 130 residues: Small ribosomal subunit protein uS8 (130 aa).

This sequence belongs to the universal ribosomal protein uS8 family. In terms of assembly, part of the 30S ribosomal subunit.

One of the primary rRNA binding proteins, it binds directly to 16S rRNA central domain where it helps coordinate assembly of the platform of the 30S subunit. The sequence is that of Small ribosomal subunit protein uS8 from Halobacterium salinarum (strain ATCC 29341 / DSM 671 / R1).